A 449-amino-acid chain; its full sequence is GTPase Der (449 aa).

EngA-type G domains lie at 4-174 (PIVA…PPKT) and 183-358 (LRVA…AQRQ). GTP contacts are provided by residues 10–17 (GRPNVGKS), 57–61 (DTAGL), 126–129 (NKCD), 189–196 (GRPNVGKS), 236–240 (DTAGI), and 301–304 (NKWD). One can recognise a KH-like domain in the interval 359–444 (KRIPTSELNN…PIVIVFRSRE (86 aa)).

Belongs to the TRAFAC class TrmE-Era-EngA-EngB-Septin-like GTPase superfamily. EngA (Der) GTPase family. Associates with the 50S ribosomal subunit.

In terms of biological role, GTPase that plays an essential role in the late steps of ribosome biogenesis. The protein is GTPase Der of Chloroflexus aggregans (strain MD-66 / DSM 9485).